A 530-amino-acid chain; its full sequence is 3-oxo-5-alpha-steroid 4-dehydrogenase (530 aa).

33-62 is a binding site for FAD; it reads DVVVVGWGGAGASAAIEAREQGAEVLVIER. A helical transmembrane segment spans residues 395–415; sequence AWQCLFGGLWAFQSMPALALM.

Belongs to the FAD-dependent oxidoreductase 2 family. The cofactor is FAD.

The protein resides in the membrane. It catalyses the reaction a 3-oxo-5alpha-steroid + A = a 3-oxo-Delta(4)-steroid + AH2. The catalysed reaction is 5alpha-androstan-3,17-dione + A = androst-4-ene-3,17-dione + AH2. It carries out the reaction 5alpha-androst-1-ene-3,17-dione + A = androsta-1,4-diene-3,17-dione + AH2. Its activity is regulated as follows. Inhibition occurs with substrate concentrations above 25 uM. Involved in the degradation of steroids having an A:B ring fusion in a trans configuration. Catalyzes the elimination of hydrogens located at positions 4 and 5 and the introduction of double bonds into ring A. The sequence is that of 3-oxo-5-alpha-steroid 4-dehydrogenase from Comamonas testosteroni (Pseudomonas testosteroni).